Reading from the N-terminus, the 482-residue chain is tRNA(Ile)-lysidine synthase (482 aa).

Residue 28 to 33 (SGGPDS) participates in ATP binding.

The protein belongs to the tRNA(Ile)-lysidine synthase family.

It is found in the cytoplasm. It catalyses the reaction cytidine(34) in tRNA(Ile2) + L-lysine + ATP = lysidine(34) in tRNA(Ile2) + AMP + diphosphate + H(+). Ligates lysine onto the cytidine present at position 34 of the AUA codon-specific tRNA(Ile) that contains the anticodon CAU, in an ATP-dependent manner. Cytidine is converted to lysidine, thus changing the amino acid specificity of the tRNA from methionine to isoleucine. This is tRNA(Ile)-lysidine synthase from Symbiobacterium thermophilum (strain DSM 24528 / JCM 14929 / IAM 14863 / T).